Consider the following 447-residue polypeptide: MLYRRWGSDKDFVISYTSSNESDKEIVEEVKLTLKAHVIELYLSNYISKDTAKKIIRAINSFKDYPSSGYEDVHEALEDYIIKNIGEEGGWVGLGRSRNDHVATALRLRTREYIFDIMEELYLLRKSLIEQAKKNLNTIMPSYTHFQPAQPTTLAHYFMYLEEELNTPWEALFNSLKLINRSPLGSGAIVGSNVKIDRKREAELLGFDDVLYNTISSTSSRIDFINAISSLTLLMLVLSRFAEDMILLSSMFVNIIKLPDSHVSTSSLMPQKRNSVTMEILRTKVGECYGDLSSLMMIYKGLPSGYNLDLQEMNKHYWNCIKHVIPSIHITRDIIQNIQIKNFGEIQGLTATDLAEEMAISGIPYRKAYIDVANKIKAGTFVAGISYTKSIENKKVIGSPNPSLLTQEIEIKEKRLNNQHEKFKQYKESVIEKMGQLGVIEDGLLQQ.

Belongs to the lyase 1 family. Argininosuccinate lyase subfamily.

The protein resides in the cytoplasm. The catalysed reaction is 2-(N(omega)-L-arginino)succinate = fumarate + L-arginine. It functions in the pathway amino-acid biosynthesis; L-arginine biosynthesis; L-arginine from L-ornithine and carbamoyl phosphate: step 3/3. This Sulfolobus acidocaldarius (strain ATCC 33909 / DSM 639 / JCM 8929 / NBRC 15157 / NCIMB 11770) protein is Argininosuccinate lyase.